We begin with the raw amino-acid sequence, 1704 residues long: ABC transporter ced-7 (1704 aa).

A helical membrane pass occupies residues V23–V43. N-linked (GlcNAc...) asparagine glycosylation is found at N126 and N145. Transmembrane regions (helical) follow at residues A256–I276, V306–F326, and A334–V354. A glycan (N-linked (GlcNAc...) asparagine) is linked at N359. A run of 2 helical transmembrane segments spans residues N362–L382 and I389–A409. N-linked (GlcNAc...) asparagine glycans are attached at residues N421 and N427. A helical membrane pass occupies residues G436–V456. An N-linked (GlcNAc...) asparagine glycan is attached at N481. The segment at N511–D536 is disordered. Residues P512–S525 show a composition bias toward polar residues. Positions I546–V777 constitute an ABC transporter 1 domain. G580 to S587 serves as a coordination point for ATP. N678, N727, and N899 each carry an N-linked (GlcNAc...) asparagine glycan. Composition is skewed to polar residues over residues R888–E902 and D911–S921. The tract at residues R888–P933 is disordered. A helical transmembrane segment spans residues L963–L983. 3 N-linked (GlcNAc...) asparagine glycosylation sites follow: N986, N1012, and N1045. 7 helical membrane passes run L1126–I1146, F1153–I1173, G1176–M1196, A1201–V1221, L1234–F1254, I1266–T1286, and L1311–V1331. The ABC transporter 2 domain maps to L1379 to S1603. G1411–T1418 provides a ligand contact to ATP. N-linked (GlcNAc...) asparagine glycans are attached at residues N1597 and N1632.

This sequence belongs to the ABC transporter superfamily. ABCA family. As to expression, ubiquitous in embryos. Expressed in larval germline precursors. Expression in larvae and adults is seen in amphid sheath cells, pharyngeal-intestinal valve and phasmid sheath cells. Low levels of expression are also seen in gonadal sheath cells.

The protein localises to the membrane. Its function is as follows. Functions in the engulfment of cell corpses during embryonic programmed cell death to translocate molecules that mediate homotypic adhesion between cell surfaces of the dying and engulfing cells. This is ABC transporter ced-7 (ced-7) from Caenorhabditis elegans.